A 115-amino-acid polypeptide reads, in one-letter code: Rapid alkalinization factor (115 aa).

An N-terminal signal peptide occupies residues 1 to 23 (MGVPSGLILCVLIGAFFISMAAA). The propeptide at 24–66 (GDSGAYDWVMPARSGGGCKGSIGECIAEEEEFELDSESNRRIL) is removed in mature form. Intrachain disulfides connect cysteine 84-cysteine 94 and cysteine 107-cysteine 113.

In terms of processing, proteolytically cleaved, probably by S1P, a subtilisin-like serine protease (subtilase).

It localises to the secreted. In terms of biological role, cell signaling peptide that may regulate plant stress, growth, and development. Mediates a rapid alkalinization of extracellular space by mediating a transient increase in the cytoplasmic Ca(2+) concentration leading to a calcium-dependent signaling events through a cell surface receptor and a concomitant activation of some intracellular mitogen-activated protein kinases. Prevents root growth and seedling development in heterologous system. The chain is Rapid alkalinization factor (RALF) from Nicotiana tabacum (Common tobacco).